A 312-amino-acid chain; its full sequence is Homoserine kinase (312 aa).

94–104 (PLGRGLGSSAA) is an ATP binding site.

It belongs to the GHMP kinase family. Homoserine kinase subfamily.

Its subcellular location is the cytoplasm. The enzyme catalyses L-homoserine + ATP = O-phospho-L-homoserine + ADP + H(+). Its pathway is amino-acid biosynthesis; L-threonine biosynthesis; L-threonine from L-aspartate: step 4/5. Its function is as follows. Catalyzes the ATP-dependent phosphorylation of L-homoserine to L-homoserine phosphate. This chain is Homoserine kinase, found in Caldanaerobacter subterraneus subsp. tengcongensis (strain DSM 15242 / JCM 11007 / NBRC 100824 / MB4) (Thermoanaerobacter tengcongensis).